The following is an 89-amino-acid chain: Defensin-like protein 78 (89 aa).

Residues Met-1 to Ala-30 form the signal peptide. Cystine bridges form between Cys-40–Cys-75, Cys-44–Cys-67, Cys-52–Cys-73, and Cys-56–Cys-74.

It belongs to the DEFL family.

It localises to the secreted. The polypeptide is Defensin-like protein 78 (Arabidopsis thaliana (Mouse-ear cress)).